The primary structure comprises 513 residues: ATP synthase subunit alpha (513 aa).

Position 169-176 (Gly169–Thr176) interacts with ATP.

It belongs to the ATPase alpha/beta chains family. As to quaternary structure, F-type ATPases have 2 components, CF(1) - the catalytic core - and CF(0) - the membrane proton channel. CF(1) has five subunits: alpha(3), beta(3), gamma(1), delta(1), epsilon(1). CF(0) has three main subunits: a(1), b(2) and c(9-12). The alpha and beta chains form an alternating ring which encloses part of the gamma chain. CF(1) is attached to CF(0) by a central stalk formed by the gamma and epsilon chains, while a peripheral stalk is formed by the delta and b chains.

The protein localises to the cell inner membrane. The catalysed reaction is ATP + H2O + 4 H(+)(in) = ADP + phosphate + 5 H(+)(out). Functionally, produces ATP from ADP in the presence of a proton gradient across the membrane. The alpha chain is a regulatory subunit. This Tolumonas auensis (strain DSM 9187 / NBRC 110442 / TA 4) protein is ATP synthase subunit alpha.